Consider the following 226-residue polypeptide: NADH-ubiquinone oxidoreductase chain 6 (226 aa).

The next 5 membrane-spanning stretches (helical) occupy residues 2–22 (STLG…LVIL), 28–48 (IYSI…LLTV), 56–76 (IYIL…VMMI), 90–110 (YNIY…ILIT), and 169–189 (IWFI…IYIT).

The protein belongs to the complex I subunit 6 family.

The protein localises to the mitochondrion membrane. The catalysed reaction is a ubiquinone + NADH + 5 H(+)(in) = a ubiquinol + NAD(+) + 4 H(+)(out). Core subunit of the mitochondrial membrane respiratory chain NADH dehydrogenase (Complex I) that is believed to belong to the minimal assembly required for catalysis. Complex I functions in the transfer of electrons from NADH to the respiratory chain. The immediate electron acceptor for the enzyme is believed to be ubiquinone. The chain is NADH-ubiquinone oxidoreductase chain 6 (nad6) from Dictyostelium discoideum (Social amoeba).